Consider the following 354-residue polypeptide: MIKTDILIIGAGPTGLFTVFEAGLLKLKTHLIDALPQPGGQCSEIYPKKPIYDIPAFPEILAGDLVSNLMEQIRPFKPGFTLGERAETLEKLDDGSFIVTTNKGTQHHAPVVAIAGGLGSFEPRKPPIPNIADFEDKGVSYFIKDPEVYRDKKVVIAGGGDSALDWAIYLADVASEVALVHRRAEFRGALDSVERVSELAKLGRIEMITNAEVVGLRGEDNLEQVVIRHKDKARGEEFRDVDDFIPLFGLSPKLGPIGSWGLEIERNAIKVDNSYDYQTNIPGVYAIGDVNTYKGKLKLILSGFHEAAIMCQSAYQRIYPDKKYVLKYTTVGGVEGFDGTKKEAKKEVVQSIGV.

FAD-binding residues include Thr-14, Asp-33, Gln-41, Tyr-46, Ala-86, Phe-121, Asp-289, and Thr-330.

This sequence belongs to the ferredoxin--NADP reductase type 2 family. In terms of assembly, homodimer. Requires FAD as cofactor.

It catalyses the reaction 2 reduced [2Fe-2S]-[ferredoxin] + NADP(+) + H(+) = 2 oxidized [2Fe-2S]-[ferredoxin] + NADPH. In Christiangramia forsetii (strain DSM 17595 / CGMCC 1.15422 / KT0803) (Gramella forsetii), this protein is Ferredoxin--NADP reductase 2.